The following is a 298-amino-acid chain: MSFSRSFSRLASSKFVLPVAAAAVGLASYSFTSSSFIANEPSKAFKGGDEWIDLKLISSHDLSHDTKHLVFELPNKDDVSGLVTASLLMTKFVTPKGSNVIRPYTPVSDTEQAGTIDFVVKKYEGGKMSSHIHDLKPNDTLSFKGPFVKWKWEPNQFKSIALIGGGTGITPLYQLIHEITKNPADKTQVSLFYGSQTPDDILIKKELDALAAKHKDQVKIVYFVDKADASWKGETGYISKEFLQKNLPAPGPDNKIFVCGPPPLYKAVSGPKVSPTDQGELTGSLAELGFSKENVFKF.

The chain crosses the membrane as a helical span at residues 15-38; sequence FVLPVAAAAVGLASYSFTSSSFIA. The FAD-binding FR-type domain maps to 49-153; the sequence is DEWIDLKLIS…KGPFVKWKWE (105 aa). Residue 156–191 participates in FAD binding; the sequence is QFKSIALIGGGTGITPLYQLIHEITKNPADKTQVSL.

The protein belongs to the flavoprotein pyridine nucleotide cytochrome reductase family. FAD serves as cofactor.

The protein localises to the mitochondrion outer membrane. It carries out the reaction 2 Fe(III)-[cytochrome b5] + NADH = 2 Fe(II)-[cytochrome b5] + NAD(+) + H(+). Its function is as follows. May mediate the reduction of outer membrane cytochrome b5. This chain is NADH-cytochrome b5 reductase 2 (MCR1), found in Scheffersomyces stipitis (strain ATCC 58785 / CBS 6054 / NBRC 10063 / NRRL Y-11545) (Yeast).